The primary structure comprises 180 residues: Cell division protein SepF (180 aa).

The segment at 21–40 (LDDDYDDGRAVGRDDRRAMH) is disordered. Residues 27–40 (DGRAVGRDDRRAMH) are compositionally biased toward basic and acidic residues.

It belongs to the SepF family. As to quaternary structure, homodimer. Interacts with FtsZ.

The protein localises to the cytoplasm. Functionally, cell division protein that is part of the divisome complex and is recruited early to the Z-ring. Probably stimulates Z-ring formation, perhaps through the cross-linking of FtsZ protofilaments. Its function overlaps with FtsA. The protein is Cell division protein SepF of Frankia casuarinae (strain DSM 45818 / CECT 9043 / HFP020203 / CcI3).